The chain runs to 158 residues: VRDSCEPVMQFFGFYWPEMLKCDKFPEGDVCIAMTPPNATEASKPQGTTVCPPCDNELKSEAIIEHLCASEFALRMKIKEVKKENGDKKIVPKKKKPLKLGPIKKKELKRLVLFLKNGADCPCHQLDNLSHNFLIMGRKVKSQYLLTAIHKWDKKNKE.

In terms of domain architecture, FZ spans 1–34 (VRDSCEPVMQFFGFYWPEMLKCDKFPEGDVCIAM). N-linked (GlcNAc...) asparagine glycosylation is present at Asn38. Cystine bridges form between Cys51-Cys121 and Cys68-Cys123. In terms of domain architecture, NTR spans 51 to 158 (CPPCDNELKS…IHKWDKKNKE (108 aa)).

This sequence belongs to the secreted frizzled-related protein (sFRP) family. In terms of assembly, interacts with WNT4, WNT1, WNT2, WNT8, MYOC and FRZD6.

Its subcellular location is the secreted. Its function is as follows. Soluble frizzled-related proteins (sFRPS) function as modulators of Wnt signaling through direct interaction with Wnts. They have a role in regulating cell growth and differentiation in specific cell types. SFRP1 decreases intracellular beta-catenin levels. Has antiproliferative effects on vascular cells, in vitro and in vivo, and can induce, in vivo, an angiogenic response. In vascular cell cycle, delays the G1 phase and entry into the S phase. In kidney development, inhibits tubule formation and bud growth in metanephroi. Inhibits WNT1/WNT4-mediated TCF-dependent transcription. The chain is Secreted frizzled-related protein 1 (Sfrp1) from Rattus norvegicus (Rat).